Here is a 505-residue protein sequence, read N- to C-terminus: MSQLAEKSCVTPADAAAPIPFDNTYARMPEAFYERVKPAAVAAPRLLRVNDALARQLRIDPAFLKSPQGVAVLSGNEIAPGSDPIAQAYAGHQFGSFVPQLGDGRAILLGEVVDAAGKRFDIQLKGSGRTRFSRRGDGRAAIGPVIREYIVSEAMAALGIPTTRSLAVVLTGEQVMRERVLPGGILTRVASSHLRVGTFQYFAARGDVENLRALADYAIARHYPDVCSAGDPYLAFFDAVVATLARLSARWMLVGFIHGVLNTDNTAIAGETIDYGPCAFIDAYRPDKVFSSIDQFGRYAFENQPAAVAWNLARFAEALLPLIADGGAKAIECANASIAAFDDHFNAAYLSGMRRKLGLVREMEGDLELASDLLTRMSENGADFTLTFRALCGAADDTKGDAEVRGLFADPSAFDQWTERWRQRLSLEGQSAEVRRTDMLSVNPMFIPRNHRIEAAIRDAEAGRFETFHELVEVLSHPFDDQPKFAGYAKPPRPEEEVRQTFCGT.

ATP-binding residues include glycine 102, glycine 104, arginine 105, lysine 125, aspartate 137, glycine 138, arginine 188, and arginine 195. Catalysis depends on aspartate 264, which acts as the Proton acceptor. Mg(2+) is bound by residues asparagine 265 and aspartate 274. An ATP-binding site is contributed by aspartate 274.

Belongs to the SELO family. The cofactor is Mg(2+). It depends on Mn(2+) as a cofactor.

It catalyses the reaction L-seryl-[protein] + ATP = 3-O-(5'-adenylyl)-L-seryl-[protein] + diphosphate. The catalysed reaction is L-threonyl-[protein] + ATP = 3-O-(5'-adenylyl)-L-threonyl-[protein] + diphosphate. The enzyme catalyses L-tyrosyl-[protein] + ATP = O-(5'-adenylyl)-L-tyrosyl-[protein] + diphosphate. It carries out the reaction L-histidyl-[protein] + UTP = N(tele)-(5'-uridylyl)-L-histidyl-[protein] + diphosphate. It catalyses the reaction L-seryl-[protein] + UTP = O-(5'-uridylyl)-L-seryl-[protein] + diphosphate. The catalysed reaction is L-tyrosyl-[protein] + UTP = O-(5'-uridylyl)-L-tyrosyl-[protein] + diphosphate. Functionally, nucleotidyltransferase involved in the post-translational modification of proteins. It can catalyze the addition of adenosine monophosphate (AMP) or uridine monophosphate (UMP) to a protein, resulting in modifications known as AMPylation and UMPylation. The sequence is that of Protein nucleotidyltransferase YdiU from Nitrobacter winogradskyi (strain ATCC 25391 / DSM 10237 / CIP 104748 / NCIMB 11846 / Nb-255).